A 356-amino-acid chain; its full sequence is Biotin synthase (356 aa).

The Radical SAM core domain occupies 51–270 (NKVQCNQLLN…IALARIMMPL (220 aa)). [4Fe-4S] cluster contacts are provided by Cys-66, Cys-70, and Cys-73. Positions 110, 141, 201, and 274 each coordinate [2Fe-2S] cluster. The interval 310–356 (PGDNKDRSLFDRLGLEPRDDHGVHEHSSHSHTHDQGHDHGPHGHSHG) is disordered. The segment covering 312–350 (DNKDRSLFDRLGLEPRDDHGVHEHSSHSHTHDQGHDHGP) has biased composition (basic and acidic residues).

The protein belongs to the radical SAM superfamily. Biotin synthase family. As to quaternary structure, homodimer. It depends on [4Fe-4S] cluster as a cofactor. [2Fe-2S] cluster is required as a cofactor.

The enzyme catalyses (4R,5S)-dethiobiotin + (sulfur carrier)-SH + 2 reduced [2Fe-2S]-[ferredoxin] + 2 S-adenosyl-L-methionine = (sulfur carrier)-H + biotin + 2 5'-deoxyadenosine + 2 L-methionine + 2 oxidized [2Fe-2S]-[ferredoxin]. The protein operates within cofactor biosynthesis; biotin biosynthesis; biotin from 7,8-diaminononanoate: step 2/2. Functionally, catalyzes the conversion of dethiobiotin (DTB) to biotin by the insertion of a sulfur atom into dethiobiotin via a radical-based mechanism. The chain is Biotin synthase from Rhodopseudomonas palustris (strain BisB18).